Reading from the N-terminus, the 731-residue chain is Catalase-peroxidase 2 (731 aa).

The segment covering 1 to 10 (MAETPNSDMS) has biased composition (polar residues). The interval 1–26 (MAETPNSDMSGATGGRSKRPKSNQDW) is disordered. A cross-link (tryptophyl-tyrosyl-methioninium (Trp-Tyr) (with M-244)) is located at residues 95–218 (WHSAGTYRTA…LGASVMGLIY (124 aa)). Catalysis depends on H96, which acts as the Proton acceptor. Positions 218-244 (YVNPEGPDGNPDPEASAKNIRQTFDRM) form a cross-link, tryptophyl-tyrosyl-methioninium (Tyr-Met) (with W-95). H259 serves as a coordination point for heme b.

Homodimer. Heme b serves as cofactor. Post-translationally, formation of the three residue Trp-Tyr-Met cross-link is important for the catalase, but not the peroxidase activity of the enzyme.

The enzyme catalyses H2O2 + AH2 = A + 2 H2O. It carries out the reaction 2 H2O2 = O2 + 2 H2O. Functionally, bifunctional enzyme with both catalase and broad-spectrum peroxidase activity. The chain is Catalase-peroxidase 2 from Haloarcula marismortui (strain ATCC 43049 / DSM 3752 / JCM 8966 / VKM B-1809) (Halobacterium marismortui).